A 156-amino-acid polypeptide reads, in one-letter code: Putative pre-16S rRNA nuclease (156 aa).

It belongs to the YqgF nuclease family.

The protein resides in the cytoplasm. Its function is as follows. Could be a nuclease involved in processing of the 5'-end of pre-16S rRNA. The sequence is that of Putative pre-16S rRNA nuclease from Phenylobacterium zucineum (strain HLK1).